The chain runs to 292 residues: Probable deoxyhypusine synthase (292 aa).

Lysine 267 serves as the catalytic Nucleophile.

The protein belongs to the deoxyhypusine synthase family. NAD(+) is required as a cofactor.

It carries out the reaction [eIF5A protein]-L-lysine + spermidine = [eIF5A protein]-deoxyhypusine + propane-1,3-diamine. The protein operates within protein modification; eIF5A hypusination. Functionally, catalyzes the NAD-dependent oxidative cleavage of spermidine and the subsequent transfer of the butylamine moiety of spermidine to the epsilon-amino group of a specific lysine residue of the eIF-5A precursor protein to form the intermediate deoxyhypusine residue. The sequence is that of Probable deoxyhypusine synthase (dys) from Pyrobaculum aerophilum (strain ATCC 51768 / DSM 7523 / JCM 9630 / CIP 104966 / NBRC 100827 / IM2).